We begin with the raw amino-acid sequence, 228 residues long: Sodium channel regulatory subunit beta-4 (228 aa).

The signal sequence occupies residues 1 to 30 (MSRAGNRGNTQARWLGIGLLGLFLLPMYLS). The Ig-like C2-type domain occupies 31-148 (LEVSVGKATT…KDLNNSATIF (118 aa)). The Extracellular segment spans residues 31 to 161 (LEVSVGKATT…VDKLEEVDNT (131 aa)). Asn45, Asn71, Asn113, and Asn142 each carry an N-linked (GlcNAc...) asparagine glycan. Residues Cys53 and Cys131 are joined by a disulfide bond. The helical transmembrane segment at 162-182 (VTLIILAVVGGVIGLLVCILL) threads the bilayer. Topologically, residues 183–228 (LKKLITFILKKTREKKKECLVSSSGNDNTENGLPGSKAEEKPPTKV) are cytoplasmic. The interval 199-228 (KECLVSSSGNDNTENGLPGSKAEEKPPTKV) is disordered. The span at 203–213 (VSSSGNDNTEN) shows a compositional bias: polar residues. A compositionally biased stretch (basic and acidic residues) spans 219–228 (KAEEKPPTKV).

The protein belongs to the sodium channel auxiliary subunit SCN4B (TC 8.A.17) family. In terms of assembly, a voltage-gated sodium (Nav) channel consists of an ion-conducting pore-forming alpha subunit functional on its own that is regulated by one or more beta subunits. The beta subunit SCN4B is disulfide-linked to the pore-forming alpha subunit. Interacts with SCN1A; regulatory subunit of SCN1A/Nav1.1. Interacts with SCN2A; regulatory subunit of SCN2A/Nav1.2. Contains an interchain disulfide bond with SCN2A. Expressed at a high level in dorsal root ganglia, at a lower level in brain, spinal cord, skeletal muscle and heart.

It is found in the cell membrane. Functionally, regulatory subunit of multiple voltage-gated sodium (Nav) channels directly mediating the depolarization of excitable membranes. Navs, also called VGSCs (voltage-gated sodium channels) or VDSCs (voltage-dependent sodium channels), operate by switching between closed and open conformations depending on the voltage difference across the membrane. In the open conformation they allow Na(+) ions to selectively pass through the pore, along their electrochemical gradient. The influx of Na+ ions provokes membrane depolarization, initiating the propagation of electrical signals throughout cells and tissues. The accessory beta subunits participate in localization and functional modulation of the Nav channels. Modulates the activity of SCN1A/Nav1.1. Modulates the activity of SCN2A/Nav1.2. This chain is Sodium channel regulatory subunit beta-4, found in Rattus norvegicus (Rat).